The chain runs to 258 residues: Large ribosomal subunit protein uL2x (258 aa).

Residues 211–231 (HGGGNHQHIGHASTVRRDAPP) form a disordered region.

It belongs to the universal ribosomal protein uL2 family.

This is Large ribosomal subunit protein uL2x (RPL8C) from Arabidopsis thaliana (Mouse-ear cress).